The chain runs to 445 residues: Phosphoglucosamine mutase (445 aa).

The active-site Phosphoserine intermediate is the serine 102. Serine 102, aspartate 241, aspartate 243, and aspartate 245 together coordinate Mg(2+). Serine 102 bears the Phosphoserine mark.

It belongs to the phosphohexose mutase family. Mg(2+) is required as a cofactor. In terms of processing, activated by phosphorylation.

It catalyses the reaction alpha-D-glucosamine 1-phosphate = D-glucosamine 6-phosphate. Functionally, catalyzes the conversion of glucosamine-6-phosphate to glucosamine-1-phosphate. In Shewanella oneidensis (strain ATCC 700550 / JCM 31522 / CIP 106686 / LMG 19005 / NCIMB 14063 / MR-1), this protein is Phosphoglucosamine mutase.